A 329-amino-acid chain; its full sequence is Tyrosine--tRNA ligase (329 aa).

Residues Tyr-31, Tyr-157, Gln-161, Asp-164, and Gln-179 each contribute to the L-tyrosine site. The 'KMSKS' region signature appears at 220–224 (KMSKS). ATP is bound at residue Lys-223.

The protein belongs to the class-I aminoacyl-tRNA synthetase family. TyrS type 4 subfamily. Homodimer.

The protein resides in the cytoplasm. The enzyme catalyses tRNA(Tyr) + L-tyrosine + ATP = L-tyrosyl-tRNA(Tyr) + AMP + diphosphate + H(+). In terms of biological role, catalyzes the attachment of tyrosine to tRNA(Tyr) in a two-step reaction: tyrosine is first activated by ATP to form Tyr-AMP and then transferred to the acceptor end of tRNA(Tyr). The sequence is that of Tyrosine--tRNA ligase from Picrophilus torridus (strain ATCC 700027 / DSM 9790 / JCM 10055 / NBRC 100828 / KAW 2/3).